Consider the following 491-residue polypeptide: Nucleoside transporter 1.2 (491 aa).

The next 6 membrane-spanning stretches (helical) occupy residues 27-47 (FYVY…VNAV), 82-102 (YNLI…LSWF), 109-129 (VRLL…MVVP), 136-156 (AGAV…KSIF), 173-193 (STMM…QIIV), and 209-229 (KIYY…LILL). Residues 261–273 (HTDEHPTHDKEGR) are compositionally biased toward basic and acidic residues. Disordered stretches follow at residues 261-280 (HTDE…SGKE) and 290-309 (AAAK…PHEV). The N-linked (GlcNAc...) asparagine glycan is linked to N274. The next 5 helical transmembrane spans lie at 333 to 353 (MFVA…GIAV), 361 to 381 (WFST…RFSP), 395 to 415 (WIIV…LLHS), 427 to 447 (VMEV…LVLG), and 460 to 480 (FVAG…GTVL).

This sequence belongs to the SLC29A/ENT transporter (TC 2.A.57) family.

It is found in the membrane. It catalyses the reaction adenosine(in) + H(+)(in) = adenosine(out) + H(+)(out). It carries out the reaction uridine(in) + H(+)(in) = uridine(out) + H(+)(out). In terms of biological role, sodium-independent nucleoside:H(+) symporter; transports adenosine with high affinity and uridine with moderate affinity. Can transport cytidine and thymidine. This chain is Nucleoside transporter 1.2, found in Leishmania donovani.